The sequence spans 81 residues: MSHAVKIYDTCIGCTQCVRACPLDVLEMVPWDGCKASQIASSPRTEDCVGCKRCETACPTDFLSIRVYLGDETTRSMGLAY.

2 consecutive 4Fe-4S ferredoxin-type domains span residues 2–31 and 39–68; these read SHAV…MVPW and IASS…IRVY. Residues C11, C14, C17, C21, C48, C51, C54, and C58 each contribute to the [4Fe-4S] cluster site.

In terms of assembly, the cyanobacterial PSI reaction center is composed of one copy each of PsaA,B,C,D,E,F,I,J,K,L,M and X, and forms trimeric complexes. [4Fe-4S] cluster serves as cofactor.

The protein localises to the cellular thylakoid membrane. The enzyme catalyses reduced [plastocyanin] + hnu + oxidized [2Fe-2S]-[ferredoxin] = oxidized [plastocyanin] + reduced [2Fe-2S]-[ferredoxin]. In terms of biological role, apoprotein for the two 4Fe-4S centers FA and FB of photosystem I (PSI); essential for photochemical activity. FB is the terminal electron acceptor of PSI, donating electrons to ferredoxin. The C-terminus interacts with PsaA/B/D and helps assemble the protein into the PSI complex. Required for binding of PsaD and PsaE to PSI. PSI is a plastocyanin/cytochrome c6-ferredoxin oxidoreductase, converting photonic excitation into a charge separation, which transfers an electron from the donor P700 chlorophyll pair to the spectroscopically characterized acceptors A0, A1, FX, FA and FB in turn. The sequence is that of Photosystem I iron-sulfur center from Prochlorococcus marinus (strain NATL2A).